The primary structure comprises 546 residues: CTP synthase (546 aa).

The interval 1–265 (MTKYVFVTGG…DEIVCHKLNI (265 aa)) is amidoligase domain. Ser-13 lines the CTP pocket. Ser-13 serves as a coordination point for UTP. ATP is bound by residues 14-19 (SLGKGI) and Asp-71. Residues Asp-71 and Glu-139 each contribute to the Mg(2+) site. CTP contacts are provided by residues 146–148 (DIE), 186–191 (KTKPTQ), and Lys-222. UTP is bound by residues 186–191 (KTKPTQ) and Lys-222. The region spanning 290–543 (NIAFVGKYVD…VRAALAHQQK (254 aa)) is the Glutamine amidotransferase type-1 domain. L-glutamine is bound at residue Gly-351. The active-site Nucleophile; for glutamine hydrolysis is the Cys-378. Residues 379-382 (LGMQ), Glu-402, and Arg-469 contribute to the L-glutamine site. Active-site residues include His-516 and Glu-518.

It belongs to the CTP synthase family. Homotetramer.

The catalysed reaction is UTP + L-glutamine + ATP + H2O = CTP + L-glutamate + ADP + phosphate + 2 H(+). It carries out the reaction L-glutamine + H2O = L-glutamate + NH4(+). The enzyme catalyses UTP + NH4(+) + ATP = CTP + ADP + phosphate + 2 H(+). Its pathway is pyrimidine metabolism; CTP biosynthesis via de novo pathway; CTP from UDP: step 2/2. With respect to regulation, allosterically activated by GTP, when glutamine is the substrate; GTP has no effect on the reaction when ammonia is the substrate. The allosteric effector GTP functions by stabilizing the protein conformation that binds the tetrahedral intermediate(s) formed during glutamine hydrolysis. Inhibited by the product CTP, via allosteric rather than competitive inhibition. Catalyzes the ATP-dependent amination of UTP to CTP with either L-glutamine or ammonia as the source of nitrogen. Regulates intracellular CTP levels through interactions with the four ribonucleotide triphosphates. The protein is CTP synthase of Thiobacillus denitrificans (strain ATCC 25259 / T1).